A 236-amino-acid chain; its full sequence is Glucosamine-6-phosphate deaminase (236 aa).

Residue aspartate 62 is the Proton acceptor; for enolization step of the active site. Residue asparagine 128 is the For ring-opening step of the active site. Histidine 130 functions as the Proton acceptor; for ring-opening step in the catalytic mechanism. Glutamate 135 acts as the For ring-opening step in catalysis.

The protein belongs to the glucosamine/galactosamine-6-phosphate isomerase family. NagB subfamily.

It catalyses the reaction alpha-D-glucosamine 6-phosphate + H2O = beta-D-fructose 6-phosphate + NH4(+). Its pathway is amino-sugar metabolism; N-acetylneuraminate degradation; D-fructose 6-phosphate from N-acetylneuraminate: step 5/5. Functionally, catalyzes the reversible isomerization-deamination of glucosamine 6-phosphate (GlcN6P) to form fructose 6-phosphate (Fru6P) and ammonium ion. The chain is Glucosamine-6-phosphate deaminase from Lacticaseibacillus paracasei (strain ATCC 334 / BCRC 17002 / CCUG 31169 / CIP 107868 / KCTC 3260 / NRRL B-441) (Lactobacillus paracasei).